The following is a 642-amino-acid chain: Threonine--tRNA ligase (642 aa).

A TGS domain is found at 1–61 (MPVITLPDGS…ENDATLAIIT (61 aa)). Residues 243–534 (DHRKIGKQLD…LTEEFAGFFP (292 aa)) form a catalytic region. Zn(2+)-binding residues include Cys-334, His-385, and His-511.

This sequence belongs to the class-II aminoacyl-tRNA synthetase family. Homodimer. Zn(2+) is required as a cofactor.

The protein localises to the cytoplasm. The catalysed reaction is tRNA(Thr) + L-threonine + ATP = L-threonyl-tRNA(Thr) + AMP + diphosphate + H(+). Functionally, catalyzes the attachment of threonine to tRNA(Thr) in a two-step reaction: L-threonine is first activated by ATP to form Thr-AMP and then transferred to the acceptor end of tRNA(Thr). Also edits incorrectly charged L-seryl-tRNA(Thr). In Salmonella dublin (strain CT_02021853), this protein is Threonine--tRNA ligase.